We begin with the raw amino-acid sequence, 314 residues long: tRNA pseudouridine synthase B (314 aa).

His-43 contributes to the substrate binding site. The active-site Nucleophile is the Asp-48. Substrate-binding residues include Tyr-76, Tyr-179, and Leu-200.

It belongs to the pseudouridine synthase TruB family. Type 1 subfamily.

The enzyme catalyses uridine(55) in tRNA = pseudouridine(55) in tRNA. Functionally, responsible for synthesis of pseudouridine from uracil-55 in the psi GC loop of transfer RNAs. The protein is tRNA pseudouridine synthase B of Escherichia coli O139:H28 (strain E24377A / ETEC).